Here is a 263-residue protein sequence, read N- to C-terminus: MAFLWLLSCFALLGTAFGCGVPAIQPVLSGLSRIVNGEDAVPGSWPWQVSLQDSTGFHFCGGSLISEDWVVTAAHCGVRTTHQVVAGEFDQGSDAESIQVLKIAKVFKNPKFNMFTINNDITLLKLATPARFSKTVSAVCLPQATDDFPAGTLCVTTGWGLTKHTNANTPDKLQQAALPLLSNAECKKFWGSKITDLMVCAGASGVSSCMGDSGGPLVCQKDGAWTLVGIVSWGSGTCSTSTPGVYARVTKLIPWVQQILQAN.

The signal sequence occupies residues 1-18; sequence MAFLWLLSCFALLGTAFG. Disulfide bonds link C19/C140, C60/C76, C154/C219, C186/C200, and C209/C238. The Peptidase S1 domain maps to 34-261; sequence IVNGEDAVPG…LIPWVQQILQ (228 aa). Catalysis depends on H75, which acts as the Charge relay system. Residue S93 is modified to Phosphoserine. The active-site Charge relay system is D120. The active-site Charge relay system is the S213.

This sequence belongs to the peptidase S1 family.

The protein resides in the secreted. It localises to the extracellular space. The catalysed reaction is Preferential cleavage: Tyr-|-Xaa, Trp-|-Xaa, Phe-|-Xaa, Leu-|-Xaa.. This Canis lupus familiaris (Dog) protein is Chymotrypsinogen 2 (CTRB1).